The following is a 177-amino-acid chain: MLDAFSRVVVNSDSKAAYVSGSDLQALKTFINDGNKRLDAVNYIVSNSSCIVSDAISGMICENPGLITPGGNCYTNRRMAACLRDGEIILRYVSYALLAGDASVLEDRCLNGLKETYIALGVPTNSTVRAVSIMKAAAVCFISNTASQRKVEVIEGDCSALASEVASYCDRVVAAVS.

Residues Cys-50 and Cys-61 each contribute to the phycourobilin site. The residue at position 72 (Asn-72) is an N4-methylasparagine. The (2R,3E)-phycoerythrobilin site is built by Cys-82 and Cys-158.

Belongs to the phycobiliprotein family. As to quaternary structure, heterodimer of an alpha and a beta chain. Post-translationally, contains two covalently linked phycoerythrobilin chromophores and one covalently linked phycourobilin chromophore.

The protein localises to the plastid. Its subcellular location is the chloroplast thylakoid membrane. Light-harvesting photosynthetic bile pigment-protein from the phycobiliprotein complex. This chain is R-phycoerythrin beta chain (cpeB), found in Lophosiphonia boldii (Red alga).